Here is a 105-residue protein sequence, read N- to C-terminus: Pyrimidine/purine nucleoside phosphorylase (105 aa).

The protein belongs to the nucleoside phosphorylase PpnP family.

The catalysed reaction is a purine D-ribonucleoside + phosphate = a purine nucleobase + alpha-D-ribose 1-phosphate. The enzyme catalyses adenosine + phosphate = alpha-D-ribose 1-phosphate + adenine. It carries out the reaction cytidine + phosphate = cytosine + alpha-D-ribose 1-phosphate. It catalyses the reaction guanosine + phosphate = alpha-D-ribose 1-phosphate + guanine. The catalysed reaction is inosine + phosphate = alpha-D-ribose 1-phosphate + hypoxanthine. The enzyme catalyses thymidine + phosphate = 2-deoxy-alpha-D-ribose 1-phosphate + thymine. It carries out the reaction uridine + phosphate = alpha-D-ribose 1-phosphate + uracil. It catalyses the reaction xanthosine + phosphate = alpha-D-ribose 1-phosphate + xanthine. In terms of biological role, catalyzes the phosphorolysis of diverse nucleosides, yielding D-ribose 1-phosphate and the respective free bases. Can use uridine, adenosine, guanosine, cytidine, thymidine, inosine and xanthosine as substrates. Also catalyzes the reverse reactions. In Delftia acidovorans (strain DSM 14801 / SPH-1), this protein is Pyrimidine/purine nucleoside phosphorylase.